The chain runs to 171 residues: Ribosome maturation factor RimM (171 aa).

In terms of domain architecture, PRC barrel spans 96 to 170; it reads AEGEYYYHEI…LVTIHVMEGL (75 aa).

This sequence belongs to the RimM family. Binds ribosomal protein uS19.

It is found in the cytoplasm. In terms of biological role, an accessory protein needed during the final step in the assembly of 30S ribosomal subunit, possibly for assembly of the head region. Essential for efficient processing of 16S rRNA. May be needed both before and after RbfA during the maturation of 16S rRNA. It has affinity for free ribosomal 30S subunits but not for 70S ribosomes. This is Ribosome maturation factor RimM from Bacillus mycoides (strain KBAB4) (Bacillus weihenstephanensis).